Reading from the N-terminus, the 627-residue chain is Protein fem-1 homolog B (627 aa).

6 ANK repeats span residues Q45–Q74, D87–H116, T120–I149, Y153–A182, C186–V215, and H218–S248. The stretch at S344–G377 is one TPR repeat. 2 ANK repeats span residues D483–A527 and E531–M568.

It belongs to the fem-1 family. Component of a CRL2 E3 ubiquitin-protein ligase complex, also named ECS (Elongin BC-CUL2/5-SOCS-box protein) complex.

It localises to the cytoplasm. The protein resides in the nucleus. Its pathway is protein modification; protein ubiquitination. Substrate-recognition component of a Cul2-RING (CRL2) E3 ubiquitin-protein ligase complex of the DesCEND (destruction via C-end degrons) pathway, which recognizes a C-degron located at the extreme C terminus of target proteins, leading to their ubiquitination and degradation. The C-degron recognized by the DesCEND pathway is usually a motif of less than ten residues and can be present in full-length proteins, truncated proteins or proteolytically cleaved forms. The CRL2(FEM1B) complex specifically recognizes proteins ending with -Gly-Leu-Asp-Arg, leading to their ubiquitination and degradation. This is Protein fem-1 homolog B from Gallus gallus (Chicken).